We begin with the raw amino-acid sequence, 464 residues long: L-cystine uptake protein TcyP (464 aa).

A run of 10 helical transmembrane segments spans residues 3-23 (TLLVGINVAVMLILVGVLYYM), 34-54 (VFTALGVGIIFGLILQFIYEP), 73-93 (YVKLLQMIVMPLILVSIISAF), 107-127 (GLIIGILILTTGIAAAVGIAA), 184-204 (PTSTISVVIFAAFIGIAFIGV), 225-245 (IVMRMVTLILRLTPYGVLALM), 263-283 (FVLASYVALIVMFVIHLLLIA), 347-367 (AGIYPAMLAMMVAPTVGIDPL), 371-391 (FILTLIAVVAISSFGVAGVGG), and 395-415 (FAALIVLSTMNLPIGIVALVI).

The protein belongs to the dicarboxylate/amino acid:cation symporter (DAACS) (TC 2.A.23) family.

The protein resides in the membrane. Mediates uptake of L-cystine, the oxidized form of L-cysteine. In Bacillus cereus (strain ATCC 10987 / NRS 248), this protein is L-cystine uptake protein TcyP.